A 924-amino-acid polypeptide reads, in one-letter code: MEIKEEGASEEGQHFLPTAQASDPGDCQFTSIQKTPNEPQLEFILACKDLVAPVRDRKLNTLVQISVIHPVEQSLTRYSSTEIVEGTRDPLFLTGVTFPSEYPIYEETKIKLTVYDVKDKSHDTVRTSVLPEHKDSPPEIGRSFLGYASFKVGELLKSKEQLLVLSLRTSDGGKVVGTIEVSVVKMGEIEDGEADHITTDIQGQKCALVCECTAPESVSGKDNLPFLNSVLKNPVCKLYRFPTSDNKWMRIREQMSESILSFHIPKELISLHIKEDLCRNQEIKELGELSPHWDNLRKNVLTHCDQMVNMYQDILTELSKETGSSFKSSSSKGDKTLEFVPINLHLQRMQVHSPHLKDALYDVITVGAPAAHFQGFKNGGLRKLLHRFETERRNTGYQFIYYSPENTAKAKEVLSNINQLQPLIATHADLLLNSASQHSPDSLKNSLKMLSEKTELFVHAFKDQLVRSALLALYTARPGGILKKPPSPKSSTEESSPQDQPPLMRGQDSIPHHSDYDEEEWDRVWANVGKSLNCIIAMVDKLIERDGGSEGSGGNNDGEKEPSLADAIPSHPREDWYEQLYPLILTLKDCMGEVVNRAKQSLTFVLLQELAYSLPQCLMLTLRRDVVFSQALAGLVCGFIIKLQTSLYDPGFLRQLHTVGLIVQYEGLLSTYSDEIGMLEDMAVGISDLKKVAFKIIEAKSNDVLPVITGRREHYVVEVKLPARMFESLPLQIKEGQLLHVYPVLFNVGINEQQTLAERFGDVSLQESINQENFELLQEYYKIFMEKMPPDYISHFQEQNDLKALLENLLQNIQSKKRKNVEIMWLAATICRKLNGIRFTCCKSAKDRTSMSVTLEQCSILRDEHQLHKDFFIRALDCMRREGCRIENVLKNIKCRKYAFNMLQLMAFPKYYRPPEGTYGKADT.

The span at M1–Q13 shows a compositional bias: basic and acidic residues. Disordered regions lie at residues M1 to G25, I481 to Y516, and D546 to P569. Residues D23–L165 enclose the C2 domain.

This sequence belongs to the inositol 3,4-bisphosphate 4-phosphatase family.

The catalysed reaction is a 1,2-diacyl-sn-glycero-3-phospho-(1D-myo-inositol-3,4-bisphosphate) + H2O = a 1,2-diacyl-sn-glycero-3-phospho-(1D-myo-inositol-3-phosphate) + phosphate. The enzyme catalyses 1D-myo-inositol 1,3,4-trisphosphate + H2O = 1D-myo-inositol 1,3-bisphosphate + phosphate. It catalyses the reaction 1D-myo-inositol 3,4-bisphosphate + H2O = 1D-myo-inositol 3-phosphate + phosphate. It participates in signal transduction; phosphatidylinositol signaling pathway. Its activity is regulated as follows. Strongly inhibited by inositol hexakisphosphate. Its function is as follows. Catalyzes the hydrolysis of the 4-position phosphate of phosphatidylinositol 3,4-bisphosphate, inositol 1,3,4-trisphosphate and inositol 3,4-bisphosphate. Plays a role in the late stages of macropinocytosis by dephosphorylating phosphatidylinositol 3,4-bisphosphate in membrane ruffles. Antagonizes the PI3K-AKT/PKB signaling pathway by dephosphorylating phosphoinositides and thereby modulating cell cycle progression and cell survival. This Pongo abelii (Sumatran orangutan) protein is Type II inositol 3,4-bisphosphate 4-phosphatase (INPP4B).